A 246-amino-acid polypeptide reads, in one-letter code: Predicted GPI-anchored protein 33 (246 aa).

Positions M1–A16 are cleaved as a signal peptide. The N-linked (GlcNAc...) asparagine glycan is linked to N214. The GPI-anchor amidated asparagine moiety is linked to residue N219. Positions A220–I246 are cleaved as a propeptide — removed in mature form.

Its subcellular location is the cell membrane. In Candida albicans (strain SC5314 / ATCC MYA-2876) (Yeast), this protein is Predicted GPI-anchored protein 33 (PGA33).